The chain runs to 462 residues: Ribosomal protein uS12 methylthiotransferase RimO (462 aa).

Positions 22-133 (ASVAFLHLGC…IIEVLQRVRQ (112 aa)) constitute an MTTase N-terminal domain. [4Fe-4S] cluster contacts are provided by C31, C67, C96, C171, C175, and C178. A Radical SAM core domain is found at 157-386 (TTGRFVSYLK…VAIQQPISAA (230 aa)). The region spanning 389-460 (QALIGQTVDV…LYDLTGEINH (72 aa)) is the TRAM domain.

The protein belongs to the methylthiotransferase family. RimO subfamily. The cofactor is [4Fe-4S] cluster.

The protein localises to the cytoplasm. It carries out the reaction L-aspartate(89)-[ribosomal protein uS12]-hydrogen + (sulfur carrier)-SH + AH2 + 2 S-adenosyl-L-methionine = 3-methylsulfanyl-L-aspartate(89)-[ribosomal protein uS12]-hydrogen + (sulfur carrier)-H + 5'-deoxyadenosine + L-methionine + A + S-adenosyl-L-homocysteine + 2 H(+). Its function is as follows. Catalyzes the methylthiolation of an aspartic acid residue of ribosomal protein uS12. The protein is Ribosomal protein uS12 methylthiotransferase RimO of Prochlorococcus marinus (strain MIT 9211).